Consider the following 118-residue polypeptide: Large ribosomal subunit protein bL19 (118 aa).

Belongs to the bacterial ribosomal protein bL19 family.

Its function is as follows. This protein is located at the 30S-50S ribosomal subunit interface and may play a role in the structure and function of the aminoacyl-tRNA binding site. The polypeptide is Large ribosomal subunit protein bL19 (Beutenbergia cavernae (strain ATCC BAA-8 / DSM 12333 / CCUG 43141 / JCM 11478 / NBRC 16432 / NCIMB 13614 / HKI 0122)).